Reading from the N-terminus, the 229-residue chain is Cytidylate kinase (229 aa).

Residue 7 to 15 participates in ATP binding; sequence GPAGAGKSS.

This sequence belongs to the cytidylate kinase family. Type 1 subfamily.

It is found in the cytoplasm. It carries out the reaction CMP + ATP = CDP + ADP. It catalyses the reaction dCMP + ATP = dCDP + ADP. This is Cytidylate kinase from Rhodopirellula baltica (strain DSM 10527 / NCIMB 13988 / SH1).